Consider the following 529-residue polypeptide: Protein FLOURY ENDOSPERM 6, chloroplastic (529 aa).

3 disordered regions span residues 1 to 22, 39 to 77, and 166 to 275; these read MLPL…PTLT, AAPH…NAAR, and QGAV…HNKS. The transit peptide at 1 to 71 directs the protein to the chloroplast; that stretch reads MLPLLLPLPV…QTRAPRRTLS (71 aa). Residues 9–18 show a composition bias toward pro residues; that stretch reads PVTPPPPLPS. Over residues 41-57 the composition is skewed to basic residues; sequence PHHHHHHRRRRVYRRQR. A coiled-coil region spans residues 400 to 452; that stretch reads VMQAQEELRSIRAKIAVLEGKMALEIIEKNKIIEEKQRRLDEAEKALSELRTV.

In terms of assembly, interacts with SKIPA. Interacts with ISA1. Expressed in leaves, stems and panicles. Expressed at lower levels in roots and developing seeds.

Its subcellular location is the plastid. It is found in the chloroplast. In terms of biological role, involved in compound starch granule formation and starch synthesis in endosperm. May act as a regulatory scaffolding protein and affect starch synthesis and compound starch granule formation through direct interaction with isoamylase 1 (ISA1). Binds starch, amylopectin and amylose through its C-terminal carbohydrate-binding domain (CBM) in vitro. The polypeptide is Protein FLOURY ENDOSPERM 6, chloroplastic (Oryza sativa subsp. japonica (Rice)).